A 485-amino-acid polypeptide reads, in one-letter code: Glutamate--tRNA ligase 1 (485 aa).

The 'HIGH' region motif lies at P10–N20. The 'KMSKS' region signature appears at K252 to R256. An ATP-binding site is contributed by K255.

This sequence belongs to the class-I aminoacyl-tRNA synthetase family. Glutamate--tRNA ligase type 1 subfamily. Monomer.

It is found in the cytoplasm. The enzyme catalyses tRNA(Glu) + L-glutamate + ATP = L-glutamyl-tRNA(Glu) + AMP + diphosphate. Its function is as follows. Catalyzes the attachment of glutamate to tRNA(Glu) in a two-step reaction: glutamate is first activated by ATP to form Glu-AMP and then transferred to the acceptor end of tRNA(Glu). The protein is Glutamate--tRNA ligase 1 of Thermoanaerobacter pseudethanolicus (strain ATCC 33223 / 39E) (Clostridium thermohydrosulfuricum).